Here is a 120-residue protein sequence, read N- to C-terminus: Ribonuclease P protein component (120 aa).

This sequence belongs to the RnpA family. As to quaternary structure, consists of a catalytic RNA component (M1 or rnpB) and a protein subunit.

The catalysed reaction is Endonucleolytic cleavage of RNA, removing 5'-extranucleotides from tRNA precursor.. In terms of biological role, RNaseP catalyzes the removal of the 5'-leader sequence from pre-tRNA to produce the mature 5'-terminus. It can also cleave other RNA substrates such as 4.5S RNA. The protein component plays an auxiliary but essential role in vivo by binding to the 5'-leader sequence and broadening the substrate specificity of the ribozyme. This Azoarcus sp. (strain BH72) protein is Ribonuclease P protein component.